The chain runs to 278 residues: Energy-coupling factor transporter ATP-binding protein EcfA (278 aa).

Residues 5–240 (LETKNLVYNY…KEVIDEADLR (236 aa)) form the ABC transporter domain. An ATP-binding site is contributed by 38–45 (GHNGAGKS).

This sequence belongs to the ABC transporter superfamily. Energy-coupling factor EcfA family. Forms a stable energy-coupling factor (ECF) transporter complex composed of 2 membrane-embedded substrate-binding proteins (S component), 2 ATP-binding proteins (A component) and 2 transmembrane proteins (T component).

The protein resides in the cell membrane. Its function is as follows. ATP-binding (A) component of a common energy-coupling factor (ECF) ABC-transporter complex. Unlike classic ABC transporters this ECF transporter provides the energy necessary to transport a number of different substrates. The sequence is that of Energy-coupling factor transporter ATP-binding protein EcfA from Methanosphaera stadtmanae (strain ATCC 43021 / DSM 3091 / JCM 11832 / MCB-3).